The following is a 1038-amino-acid chain: Kinesin-like protein KIF17 (1038 aa).

A Kinesin motor domain is found at 5–335; that stretch reads SVKVVVRCRP…LRYANRAKNI (331 aa). 91 to 98 lines the ATP pocket; that stretch reads GQTGSGKS. Residues 346–470 are a coiled coil; that stretch reads KDALLREYQE…ETEAILKAEV (125 aa). 3 disordered regions span residues 379–401, 503–559, and 636–657; these read TQTP…VQQD, LSMP…GPEE, and DSSQ…LLEP. Polar residues-rich tracts occupy residues 533–551 and 636–651; these read SEFS…SATS and DSSQ…QPSS. Residues 748-855 are a coiled coil; the sequence is QQVLARLQLL…QLEKIDYLAT (108 aa). Disordered stretches follow at residues 916 to 940 and 976 to 1038; these read VVPT…PHMQ and MKSL…GEPL. Residues 983–1000 show a composition bias toward low complexity; it reads NSPPGLNSSLSNNSALPP.

It belongs to the TRAFAC class myosin-kinesin ATPase superfamily. Kinesin family. In terms of assembly, homodimer. Interacts with APBA1 (via PDZ domain); the interaction is direct and is required for association of KIF17 with the cargo that is to be transported. Interacts with IFT B complex components IFT52 and IFT57. Interacts with IFT70B. Interacts with PIWIL1. Interacts with TBATA. As to expression, highly expressed in the gray matter of the brain, especially in the hippocampus.

The protein resides in the cytoplasm. It localises to the cytoskeleton. Its subcellular location is the cell projection. It is found in the cilium. The protein localises to the dendrite. Dendrite-specific motor protein which, in association with the Apba1-containing complex (LIN-10-LIN-2-LIN-7 complex), transports vesicles containing N-methyl-D-aspartate (NMDA) receptor subunit NR2B along microtubules. This chain is Kinesin-like protein KIF17 (Kif17), found in Mus musculus (Mouse).